The following is a 727-amino-acid chain: Telomere repeats-binding bouquet formation protein 1 (727 aa).

2 ARM repeats span residues 101-144 (ELFE…RETG) and 339-382 (NGLP…GEYP). Residues 398 to 446 (ENNLEEHWRKAKEILHRIEQLEREGNEEEIQRENYQDNISSMNISIQNT) are a coiled coil. Basic and acidic residues predominate over residues 457–468 (RGSKAEDEDKSH). Positions 457 to 493 (RGSKAEDEDKSHSRQLQSYKSHGVMSKACTNDDQMKT) are disordered. Positions 523-662 (QNLHEETTFE…QRLSNESTTP (140 aa)) are interaction with TERF1. Threonine 648 carries the phosphothreonine modification. The Myb-like domain maps to 666 to 719 (KKRRIRKNFTEEEVNYLFNGVKKMGNHWNSILWSFPFQQGRKAVDLAHKYHKLT).

It belongs to the TERB1 family. Component of the MAJIN-TERB1-TERB2 complex, composed of MAJIN, TERB1 and TERB2. Interacts with TERF1, STAG3 and SUN1. Interacts (via Myb-like domain) with the cohesin complex; probably mediated via interaction with STAG3. In terms of processing, phosphorylated by CDK. Phosphorylation by CDK takes place in late prophase when the cap exchange is prominent. is important for the stabilization of telomere attachment but dispenable for the cap exchange.

It localises to the chromosome. The protein resides in the telomere. The protein localises to the nucleus inner membrane. Meiosis-specific telomere-associated protein involved in meiotic telomere attachment to the nucleus inner membrane, a crucial step for homologous pairing and synapsis. Component of the MAJIN-TERB1-TERB2 complex, which promotes telomere cap exchange by mediating attachment of telomeric DNA to the inner nuclear membrane and replacement of the protective cap of telomeric chromosomes: in early meiosis, the MAJIN-TERB1-TERB2 complex associates with telomeric DNA and the shelterin/telosome complex. During prophase, the complex matures and promotes release of the shelterin/telosome complex from telomeric DNA. In the MAJIN-TERB1-TERB2 complex, TERB1 probably mediates association with the shelterin/telosome complex via interaction with TERF1, promoting priming telomeric DNA attachment'. Promotes telomere association with the nuclear envelope and deposition of the SUN-KASH/LINC complex. Also recruits cohesin to telomeres to develop structural rigidity. This chain is Telomere repeats-binding bouquet formation protein 1, found in Homo sapiens (Human).